A 251-amino-acid chain; its full sequence is 2-C-methyl-D-erythritol 4-phosphate cytidylyltransferase (251 aa).

The protein belongs to the IspD/TarI cytidylyltransferase family. IspD subfamily.

It catalyses the reaction 2-C-methyl-D-erythritol 4-phosphate + CTP + H(+) = 4-CDP-2-C-methyl-D-erythritol + diphosphate. The protein operates within isoprenoid biosynthesis; isopentenyl diphosphate biosynthesis via DXP pathway; isopentenyl diphosphate from 1-deoxy-D-xylulose 5-phosphate: step 2/6. Catalyzes the formation of 4-diphosphocytidyl-2-C-methyl-D-erythritol from CTP and 2-C-methyl-D-erythritol 4-phosphate (MEP). The protein is 2-C-methyl-D-erythritol 4-phosphate cytidylyltransferase of Cupriavidus pinatubonensis (strain JMP 134 / LMG 1197) (Cupriavidus necator (strain JMP 134)).